Here is a 126-residue protein sequence, read N- to C-terminus: Small ribosomal subunit protein uS12c (126 aa).

It belongs to the universal ribosomal protein uS12 family. Part of the 30S ribosomal subunit.

It is found in the plastid. The protein localises to the chloroplast. With S4 and S5 plays an important role in translational accuracy. Located at the interface of the 30S and 50S subunits. The polypeptide is Small ribosomal subunit protein uS12c (rps12) (Trieres chinensis (Marine centric diatom)).